Here is a 431-residue protein sequence, read N- to C-terminus: MYRFAPSPTGDMHIGNLRAAIFNYICARQKNMDFILRIEDTDKARNIAGKEEEIKEILNLFSISWQHYYIQSENLKFHRQMALKLVSEKKAFACFCTEEELEAKKELAKKQGKAYRYDGTCEKLADIDVLECEKPFVIRLKKPTHTMKFTDFIKGELSFEPENIDSFVIMRTDKTPTYNFACAVDDMLENVTCIIRGEDHVSNTPKQEHIRASLGYNKAMTYAHLPIILNEEGVKMSKREAHSSVKWLLESGILPSAIANYLIMLGNKTPCEIFTLEKAIKWFDISKVSKAPARFDLKKLLQINREHIKMIKDDELNKILDLNKDLAPLAKFYTQEASTIKELKEKMQAIFNAKNFGEFETECKILKELLKDIELFENYEDFKNELLNKSNLKGKKFFMPLRIILTGNIHGPELSDLYPYIKNFIHELARI.

A 'HIGH' region motif is present at residues 6 to 16 (PSPTGDMHIGN). The 'KMSKS' region signature appears at 235-239 (KMSKR). Position 238 (Lys-238) interacts with ATP.

It belongs to the class-I aminoacyl-tRNA synthetase family. Glutamate--tRNA ligase type 1 subfamily. Monomer.

The protein resides in the cytoplasm. It catalyses the reaction tRNA(Glu) + L-glutamate + ATP = L-glutamyl-tRNA(Glu) + AMP + diphosphate. Functionally, catalyzes the attachment of glutamate to tRNA(Glu) in a two-step reaction: glutamate is first activated by ATP to form Glu-AMP and then transferred to the acceptor end of tRNA(Glu). The polypeptide is Glutamate--tRNA ligase 1 (Campylobacter jejuni (strain RM1221)).